The following is a 709-amino-acid chain: Dual specificity calcium/calmodulin-dependent 3',5'-cyclic nucleotide phosphodiesterase 1C (709 aa).

Met-1 bears the N-acetylmethionine mark. A calmodulin-binding region spans residues 123-146; it reads EKPRFKSIVHAVQAGIFVERMYRR. Residues 151–528 form the PDEase domain; it reads VGLSYPPAVI…ERWRAKVPKE (378 aa). Catalysis depends on His-228, which acts as the Proton donor. 4 residues coordinate Zn(2+): His-232, His-268, Asp-269, and Asp-376. Asp-269 contributes to the Mg(2+) binding site. Disordered stretches follow at residues 453 to 495 and 523 to 650; these read LIDE…APIN and AKVP…TCRL. Over residues 483 to 495 the composition is skewed to polar residues; it reads VKTSGSEGSAPIN. Residues 523–556 show a composition bias toward basic and acidic residues; sequence AKVPKEEKAKKEAEEKARLAAEEQQKEMEAKSQA. Polar residues predominate over residues 571 to 581; the sequence is ETKNQVNGTRA. Basic and acidic residues-rich tracts occupy residues 582–598 and 606–633; these read NKSDNPRGKNSKAEKSS and DFKDGKNKTDKKDHSNIGNDSKKTDGTK.

The protein belongs to the cyclic nucleotide phosphodiesterase family. PDE1 subfamily. As to quaternary structure, homodimer. Zn(2+) is required as a cofactor. Mg(2+) serves as cofactor. As to expression, isoform PDE1C2 is present in the heart and brain and, at lower levels in the lung, liver, kidney and skeletal muscle. Isoform PDE1C1 is expressed in the heart and brain and, at lower levels in lung. Also expressed at low levels in uterus and testis.

It is found in the lysosome. It carries out the reaction a nucleoside 3',5'-cyclic phosphate + H2O = a nucleoside 5'-phosphate + H(+). It catalyses the reaction 3',5'-cyclic GMP + H2O = GMP + H(+). The enzyme catalyses 3',5'-cyclic AMP + H2O = AMP + H(+). Its activity is regulated as follows. Type I PDE are activated by the binding of calmodulin in the presence of Ca(2+). In terms of biological role, calmodulin-dependent cyclic nucleotide phosphodiesterase with a dual specificity for the second messengers cAMP and cGMP, which are key regulators of many important physiological processes. Has a high affinity for both cAMP and cGMP. Modulates the amplitude and duration of the cAMP signal in sensory cilia in response to odorant stimulation, hence contributing to the generation of action potentials. Regulates smooth muscle cell proliferation. Regulates the stability of growth factor receptors, including PDGFRB. This chain is Dual specificity calcium/calmodulin-dependent 3',5'-cyclic nucleotide phosphodiesterase 1C, found in Homo sapiens (Human).